A 323-amino-acid chain; its full sequence is DNA repair and recombination protein RadA (323 aa).

115-122 is a binding site for ATP; it reads GEFGSGKT.

Belongs to the eukaryotic RecA-like protein family.

Its function is as follows. Involved in DNA repair and in homologous recombination. Binds and assemble on single-stranded DNA to form a nucleoprotein filament. Hydrolyzes ATP in a ssDNA-dependent manner and promotes DNA strand exchange between homologous DNA molecules. The polypeptide is DNA repair and recombination protein RadA (Thermoplasma volcanium (strain ATCC 51530 / DSM 4299 / JCM 9571 / NBRC 15438 / GSS1)).